The following is a 238-amino-acid chain: Oil body-associated protein 1A (238 aa).

The protein belongs to the OBAP family. In terms of tissue distribution, expressed in seeds, but not in leaves or roots. Highest expression in scutellum. Detected in embryo axis and endosperm.

The protein resides in the lipid droplet. The polypeptide is Oil body-associated protein 1A (Zea mays (Maize)).